A 239-amino-acid chain; its full sequence is Ribonuclease HII (239 aa).

One can recognise an RNase H type-2 domain in the interval 30–221; sequence GPVAGVDEVG…VRRLVTAGTP (192 aa). The a divalent metal cation site is built by Asp-36, Glu-37, and Asp-130.

This sequence belongs to the RNase HII family. It depends on Mn(2+) as a cofactor. Mg(2+) serves as cofactor.

Its subcellular location is the cytoplasm. The enzyme catalyses Endonucleolytic cleavage to 5'-phosphomonoester.. Functionally, endonuclease that specifically degrades the RNA of RNA-DNA hybrids. The polypeptide is Ribonuclease HII (Mycobacterium sp. (strain JLS)).